Here is a 120-residue protein sequence, read N- to C-terminus: Small ribosomal subunit protein uS13 (120 aa).

The tract at residues 96-120 (PCRGQRTRTNARTRKGPRKAIAGKK) is disordered.

This sequence belongs to the universal ribosomal protein uS13 family. In terms of assembly, part of the 30S ribosomal subunit. Forms a loose heterodimer with protein S19. Forms two bridges to the 50S subunit in the 70S ribosome.

Located at the top of the head of the 30S subunit, it contacts several helices of the 16S rRNA. In the 70S ribosome it contacts the 23S rRNA (bridge B1a) and protein L5 of the 50S subunit (bridge B1b), connecting the 2 subunits; these bridges are implicated in subunit movement. Contacts the tRNAs in the A and P-sites. This is Small ribosomal subunit protein uS13 from Dechloromonas aromatica (strain RCB).